The sequence spans 765 residues: Beta-glucosidase cel3A (765 aa).

The N-terminal stretch at 1 to 24 (MRWSSPTSSSLSLVALLLVAHVDA) is a signal peptide. N-linked (GlcNAc...) asparagine glycans are attached at residues Asn66, Asn124, Asn250, Asn304, Asn311, Asn349, Asn549, Asn588, Asn657, and Asn681.

It belongs to the glycosyl hydrolase 3 family.

It is found in the secreted. The enzyme catalyses Hydrolysis of terminal, non-reducing beta-D-glucosyl residues with release of beta-D-glucose.. It participates in glycan metabolism; cellulose degradation. Beta-glucosidases are one of a number of cellulolytic enzymes involved in the degradation of cellulosic biomass. Catalyzes the last step releasing glucose from the inhibitory cellobiose. Shows higher activities on cellobiose and cellotriose but lower activities on laminarioligosaccharides and polymers. The sequence is that of Beta-glucosidase cel3A from Pyricularia oryzae (strain 70-15 / ATCC MYA-4617 / FGSC 8958) (Rice blast fungus).